The following is a 508-amino-acid chain: ATP synthase subunit alpha (508 aa).

Residue 169 to 176 (GDRGTGKS) coordinates ATP.

The protein belongs to the ATPase alpha/beta chains family. In terms of assembly, F-type ATPases have 2 components, CF(1) - the catalytic core - and CF(0) - the membrane proton channel. CF(1) has five subunits: alpha(3), beta(3), gamma(1), delta(1), epsilon(1). CF(0) has three main subunits: a(1), b(2) and c(9-12). The alpha and beta chains form an alternating ring which encloses part of the gamma chain. CF(1) is attached to CF(0) by a central stalk formed by the gamma and epsilon chains, while a peripheral stalk is formed by the delta and b chains.

Its subcellular location is the cell membrane. It catalyses the reaction ATP + H2O + 4 H(+)(in) = ADP + phosphate + 5 H(+)(out). Produces ATP from ADP in the presence of a proton gradient across the membrane. The alpha chain is a regulatory subunit. This is ATP synthase subunit alpha from Natranaerobius thermophilus (strain ATCC BAA-1301 / DSM 18059 / JW/NM-WN-LF).